Consider the following 54-residue polypeptide: Hemolytic toxin (54 aa).

Residues 3 to 12 (ALAGTIIAGA) form a plays an important role in the hemolytic activity region. The segment at 11–30 (GASLGFQILDKVLGELGKVS) is N-terminal region.

This sequence belongs to the actinoporin family. Sea anemone subfamily. In terms of assembly, octamer or nonamer in membranes. Monomer in the soluble state.

Its subcellular location is the secreted. The protein localises to the nematocyst. It localises to the target cell membrane. Its function is as follows. Pore-forming protein that forms cations-selective hydrophilic pores of around 1 nm and causes cytolysis. Pore formation is a multi-step process that involves specific recognition of membrane sphingomyelin (but neither cholesterol nor phosphatidylcholine) using aromatic rich region and adjacent phosphocholine (POC) binding site, firm binding to the membrane (mainly driven by hydrophobic interactions) accompanied by the transfer of the N-terminal region to the lipid-water interface and finally pore formation after oligomerization of monomers. The protein is Hemolytic toxin of Heteractis magnifica (Magnificent sea anemone).